We begin with the raw amino-acid sequence, 227 residues long: Octanoyltransferase (227 aa).

One can recognise a BPL/LPL catalytic domain in the interval 35-210 (DKTPDEIWLV…TFLQLVGYSA (176 aa)). Residues 74–81 (RGGQVTYH), 141–143 (SLG), and 154–156 (GLA) contribute to the substrate site. Residue Cys172 is the Acyl-thioester intermediate of the active site.

This sequence belongs to the LipB family.

The protein resides in the cytoplasm. The enzyme catalyses octanoyl-[ACP] + L-lysyl-[protein] = N(6)-octanoyl-L-lysyl-[protein] + holo-[ACP] + H(+). It functions in the pathway protein modification; protein lipoylation via endogenous pathway; protein N(6)-(lipoyl)lysine from octanoyl-[acyl-carrier-protein]: step 1/2. In terms of biological role, catalyzes the transfer of endogenously produced octanoic acid from octanoyl-acyl-carrier-protein onto the lipoyl domains of lipoate-dependent enzymes. Lipoyl-ACP can also act as a substrate although octanoyl-ACP is likely to be the physiological substrate. The protein is Octanoyltransferase of Pectobacterium atrosepticum (strain SCRI 1043 / ATCC BAA-672) (Erwinia carotovora subsp. atroseptica).